A 473-amino-acid polypeptide reads, in one-letter code: GTPase Der (473 aa).

2 consecutive EngA-type G domains span residues F3–R167 and L203–N378. Residues G9–S16, D56–L60, N119–E122, G209–S216, D256–M260, and N321–D324 each bind GTP. Positions K379–E463 constitute a KH-like domain.

It belongs to the TRAFAC class TrmE-Era-EngA-EngB-Septin-like GTPase superfamily. EngA (Der) GTPase family. In terms of assembly, associates with the 50S ribosomal subunit.

GTPase that plays an essential role in the late steps of ribosome biogenesis. The polypeptide is GTPase Der (Rhizobium etli (strain CIAT 652)).